Consider the following 171-residue polypeptide: Translationally-controlled tumor protein homolog (171 aa).

The region spanning 1–171 (MIIYKDIITG…FKDGLEIEKC (171 aa)) is the TCTP domain.

This sequence belongs to the TCTP family.

The protein localises to the cytoplasm. Involved in calcium binding and microtubule stabilization. The protein is Translationally-controlled tumor protein homolog (tpt1) of Labeo rohita (Indian major carp).